The chain runs to 1076 residues: MSSNTSSVMSSPRVEKRSFSSTLKSFFTNPNKKRPSSKKVFSSNLSYANHLEESDVEDTLHVNKRKRVSGTSQHSDSLTQNNNNAPIIIYGTENTERPPLLPILPIQRLRLLREKQRVRNMRELGLIQSTEFPSITSSVILGSQSKSDEGGSYLCTSSTPSPIKNGSCTRQLAGKSGEDTNVGLPILKSLKNRSNRKRFHSQSKGTVWSANFEYDLSEYDAIQKKDNKDKEGNAGGDQKTSENRNNIKSSISNGNLATGPNLTSEIEDLRADINSNRLSNPQKNLLLKGPASTVAKTAPIQESFVPNSERSGTPTLKKNIEPKKDKESIVLPTVGFDFIKDNETPSKKTSPKATSSAGAVFKSSVEMGKTDKSTKTAEAPTLSFNFSQKANKTKAVDNTVPSTTLFNFGGKSDTVTSASQPFKFGKTSEKSENHTESDAPPKSTAPIFSFGKQEENGDEGDDENEPKRKRRLPVSEDTNTKPLFDFGKTGDQKETKKGESEKDASGKPSFVFGASDKQAEGTPLFTFGKKADVTSNIDSSAQFTFGKAATAKETHTKPSETPATIVKKPTFTFGQSTSENKISEGSAKPTFSFSKSEEERKSSPISNEAAKPSFSFPGKPVDVQAPTDDKTLKPTFSFTEPAQKDSSVVSEPKKPSFTFASSKTSQPKPLFSFGKSDAAKEPPGSNTSFSFTKPPANETDKRPTPPSFTFGGSTTNNTTTTSTKPSFSFGAPESMKSTASTAAANTEKLSNGFSFTKFNHNKEKSNSPTSFFDGSASSTPIPVLGKPTDATGNTTSKSAFSFGTANTNGTNASANSTSFSFNAPATGNGTTTTSNTSGTNIAGTFNVGKPDQSIASGNTNGAGSAFGFSSSGTAATGAASNQSSFNFGNNGAGGLNPFTSATSSTNANAGLFNKPPSTNAQNVNVPSAFNFTGNNSTPGGGSVFNMNGNTNANTVFAGSNNQPHQSQTPSFNTNSSFTPSTVPNINFSGLNGGITNTATNALRPSDIFGANAASGSNSNVTNPSSIFGGAGGVPTTSFGQPQSAPNQMGMGTNNGMSMGGGVMANRKIARMRHSKR.

Low complexity predominate over residues 1–11; sequence MSSNTSSVMSS. Positions 1-39 are disordered; the sequence is MSSNTSSVMSSPRVEKRSFSSTLKSFFTNPNKKRPSSKK. The residue at position 2 (Ser2) is an N-acetylserine. Residues 19–30 show a composition bias toward polar residues; it reads FSSTLKSFFTNP. 2 positions are modified to phosphoserine: Ser54 and Ser161. Disordered regions lie at residues 143-183 and 224-260; these read SQSK…TNVG and KKDN…ATGP. Polar residues-rich tracts occupy residues 154–170 and 243–260; these read LCTS…SCTR and NRNN…ATGP. An FXF 1 repeat occupies 336-338; the sequence is FDF. Residue Thr381 is modified to Phosphothreonine. Residue Ser383 is modified to Phosphoserine. The stretch at 384–386 is one FXF 2 repeat; sequence FNF. The interval 403–518 is disordered; sequence TTLFNFGGKS…SFVFGASDKQ (116 aa). 2 FXFG repeats span residues 406–409 and 422–425; these read FNFG and FKFG. A compositionally biased stretch (basic and acidic residues) spans 426-439; the sequence is KTSEKSENHTESDA. FXFG repeat units follow at residues 448–451 and 484–487; these read FSFG and FDFG. The span at 488 to 505 shows a compositional bias: basic and acidic residues; it reads KTGDQKETKKGESEKDAS. FXFG repeat units follow at residues 510–513, 525–528, 543–546, and 571–574; these read FVFG and FTFG. The tract at residues 548–743 is disordered; sequence AATAKETHTK…SMKSTASTAA (196 aa). 4 FXF repeats span residues 591–593, 614–616, 636–638, and 657–659; these read FSF and FTF. 2 stretches are compositionally biased toward polar residues: residues 634–649 and 658–667; these read PTFS…SSVV and TFASSKTSQP. Residue Ser637 is modified to Phosphoserine. The FXFG 9 repeat unit spans residues 671–674; it reads FSFG. The FXF 7 repeat unit spans residues 689-691; it reads FSF. FXFG repeat units follow at residues 708 to 711 and 727 to 730; these read FTFG and FSFG. The span at 708–723 shows a compositional bias: low complexity; the sequence is FTFGGSTTNNTTTTST. An FXF 8 repeat occupies 753-755; that stretch reads FSF. The stretch at 800 to 803 is one FXFG 12 repeat; that stretch reads FSFG. 2 FXF repeats span residues 819 to 821 and 866 to 868; these read FSF and FGF. Residues 885–888 form an FXFG 13 repeat; the sequence is FNFG. Residues 929–931 form an FXF 11 repeat; it reads FNF. The tract at residues 940-979 is disordered; it reads GGSVFNMNGNTNANTVFAGSNNQPHQSQTPSFNTNSSFTP. Over residues 944–964 the composition is skewed to polar residues; that stretch reads FNMNGNTNANTVFAGSNNQPH. Low complexity predominate over residues 965 to 979; it reads QSQTPSFNTNSSFTP. 3 FG repeats span residues 1008 to 1009, 1027 to 1028, and 1038 to 1039; these read FG. Residues 1025 to 1054 are disordered; that stretch reads SIFGGAGGVPTTSFGQPQSAPNQMGMGTNN. The segment covering 1034-1045 has biased composition (polar residues); the sequence is PTTSFGQPQSAP. The segment at 1040-1076 is interaction with KAP95; the sequence is QPQSAPNQMGMGTNNGMSMGGGVMANRKIARMRHSKR.

In terms of assembly, component of the nuclear pore complex (NPC). NPC constitutes the exclusive means of nucleocytoplasmic transport. NPCs allow the passive diffusion of ions and small molecules and the active, nuclear transport receptor-mediated bidirectional transport of macromolecules such as proteins, RNAs, ribonucleoparticles (RNPs), and ribosomal subunits across the nuclear envelope. Due to its 8-fold rotational symmetry, all subunits are present with 8 copies or multiples thereof. Interacts through its FG repeats with nuclear transport receptors. Binds to the nuclear basket of the NPC through NUP60. Interacts with KAP122. Phosphorylated by CDC28.

It is found in the nucleus. The protein resides in the nuclear pore complex. The protein localises to the nucleus membrane. Functions as a component of the nuclear pore complex (NPC). NPC components, collectively referred to as nucleoporins (NUPs), can play the role of both NPC structural components and of docking or interaction partners for transiently associated nuclear transport factors. Active directional transport is assured by both, a Phe-Gly (FG) repeat affinity gradient for these transport factors across the NPC and a transport cofactor concentration gradient across the nuclear envelope (GSP1 and GSP2 GTPases associated predominantly with GTP in the nucleus, with GDP in the cytoplasm). As one of the FG repeat nucleoporins NUP1 is involved in interactions with and guidance of nuclear transport receptors such as SRP1-KAP95 (importin alpha and beta) through the NPC. Like the closely related NUP2 it also plays an important role in disassembling and recycling SRP1-KAP95 to the cytoplasm after nuclear import. Upon entry of the heterotrimeric SRP1-KAP95-cargo complex in the nucleus, NUP1 binds through its C-terminus to KAP95, thus accelerating the release of KAP95 and, indirectly, of the nuclear localization signal (NLS)-containing cargo from the SRP1-KAP95-cargo complex. In Saccharomyces cerevisiae (strain ATCC 204508 / S288c) (Baker's yeast), this protein is Nucleoporin NUP1 (NUP1).